The primary structure comprises 445 residues: Putative aldehyde dehydrogenase AldX (445 aa).

Active-site residues include Glu-214 and Cys-248.

Belongs to the aldehyde dehydrogenase family.

The catalysed reaction is an aldehyde + NAD(+) + H2O = a carboxylate + NADH + 2 H(+). This is Putative aldehyde dehydrogenase AldX (aldX) from Bacillus subtilis (strain 168).